We begin with the raw amino-acid sequence, 30 residues long: Agglutinin alpha-1 chain (30 aa).

A Jacalin-type lectin domain is found at 1–30; it reads GVAFDDGSYTGIREINFEYNRETAIGGXQV.

Belongs to the jacalin lectin family. In terms of assembly, tetramer of four alpha chains associated with two or four beta chains.

Its function is as follows. N-acetyl-galactosamine and D-galactose specific lectin. Binds the Tn-antigen structure GalNAc-alpha-1-O-Ser, the T-antigen structure Gal-beta1-3-GalNAc and IgA. The sequence is that of Agglutinin alpha-1 chain from Morus nigra (Black mulberry).